Reading from the N-terminus, the 72-residue chain is MAKQSAIEQDGVIVEALSNAMFRVELENGHEITAHISGKMRMHYIKILPGDKVRVEMSPYDLSKGRIVFRYK.

An S1-like domain is found at 1 to 72 (MAKQSAIEQD…SKGRIVFRYK (72 aa)).

This sequence belongs to the IF-1 family. Component of the 30S ribosomal translation pre-initiation complex which assembles on the 30S ribosome in the order IF-2 and IF-3, IF-1 and N-formylmethionyl-tRNA(fMet); mRNA recruitment can occur at any time during PIC assembly.

Its subcellular location is the cytoplasm. One of the essential components for the initiation of protein synthesis. Stabilizes the binding of IF-2 and IF-3 on the 30S subunit to which N-formylmethionyl-tRNA(fMet) subsequently binds. Helps modulate mRNA selection, yielding the 30S pre-initiation complex (PIC). Upon addition of the 50S ribosomal subunit IF-1, IF-2 and IF-3 are released leaving the mature 70S translation initiation complex. This is Translation initiation factor IF-1 from Bacteroides fragilis (strain ATCC 25285 / DSM 2151 / CCUG 4856 / JCM 11019 / LMG 10263 / NCTC 9343 / Onslow / VPI 2553 / EN-2).